The chain runs to 480 residues: MGQLVSFFQEIPVFFQEALNIALAVVTLLAIVKGVLNLWKSGLFQLLMFLILAGRSCSFRIGYHTSFESFTMTIGGVFHELPALCKVNDTYNLVRLSHNSSLALSVEYGDTGTVMCEHGHVVSGNYTECTGASEEYNWVLDWVLRGLQHDFSRDPVICCEPKKKTNAEFQFRLNLTQRHKGDHYQNKIKTALTHLFGPFAYNEKDPKIFVTMRNTTWTNQCVMSHTDSLRLLASNGGNSFSGRGLKAFFSWSLSDSTGVDMPGGYCLEKWMLIASELKCFGNTALAKCNLKHDSEFCDMIKLFDFNKNAISKLNNNTIEAVNQLTKTVNSLISDNLLMKNRLRELLKVPYCNYTRFWYVNHTRTGEHSLPKCWLVNNGSYLNESDFRNEWILESDHLISEMLSKEYQERQGRTPLTLVDLCFWSAVFYTTTLFLHLVGFPTHRHISGEPCPLPHRLNRHGACNCGRFKRLKKPLVWYKHH.

The N-myristoyl glycine; by host moiety is linked to residue Gly2. Over 2–17 (GQLVSFFQEIPVFFQE) the chain is Extracellular. A helical membrane pass occupies residues 18–33 (ALNIALAVVTLLAIVK). Residues 34–58 (GVLNLWKSGLFQLLMFLILAGRSCS) are Cytoplasmic-facing. Cys57 contacts Zn(2+). The Extracellular segment spans residues 59-419 (FRIGYHTSFE…QGRTPLTLVD (361 aa)). Disulfide bonds link Cys85–Cys221, Cys266–Cys279, Cys288–Cys297, and Cys351–Cys372. Residues Asn88, Asn174, and Asn214 are each glycosylated (N-linked (GlcNAc...) asparagine; by host). 4 N-linked (GlcNAc...) asparagine; by host glycosylation sites follow: Asn352, Asn360, Asn377, and Asn382. The chain crosses the membrane as a helical span at residues 420–440 (LCFWSAVFYTTTLFLHLVGFP). At 441-480 (THRHISGEPCPLPHRLNRHGACNCGRFKRLKKPLVWYKHH) the chain is on the cytoplasmic side. Positions 442, 444, 450, 454, 462, 464, and 480 each coordinate Zn(2+).

The protein belongs to the arenaviridae GPC protein family. In terms of assembly, interacts with glycoprotein G2. Part of the GP complex (GP-C) together with glycoprotein G1 and glycoprotein G2. The GP-complex interacts with protein Z, which interacts with ribonucleocapsid; these interactions may induce virion budding. As to quaternary structure, homotrimer; disulfide-linked. In pre-fusion state, G1 homotrimers bind G2 homotrimers via ionic interactions. Part of the GP complex (GP-C) together with glycoprotein G2 and the stable signal peptide. The GP-complex interacts with protein Z, which interacts with ribonucleocapsid; these interactions may induce virion budding. Homotrimer. Interacts with the stable signal peptide. In pre-fusion state, G2 homotrimers bind G1 homotrimers via ionic interactions. Part of the GP complex (GP-C) together with glycoprotein G1 and the stable signal peptide. Acidification in the endosome triggers rearrangements, which ultimately leads to a 6 helix bundle formed by the two heptad repeat domains (HR1 and HR2) in post-fusion state. The GP-complex interacts with protein Z, which interacts with ribonucleocapsid; these interactions may induce virion budding. Post-translationally, specific enzymatic cleavages in vivo yield mature proteins. GP-C polyprotein is cleaved in the endoplasmic reticulum by the host protease MBTPS1. Only cleaved glycoprotein is incorporated into virions. In terms of processing, the SSP remains stably associated with the GP complex following cleavage by signal peptidase and plays crucial roles in the trafficking of GP through the secretory pathway. Myristoylation is necessary for GP2-mediated fusion activity.

The protein resides in the virion membrane. It is found in the host endoplasmic reticulum membrane. Its subcellular location is the host Golgi apparatus membrane. It localises to the host cell membrane. Functions as a cleaved signal peptide that is retained as the third component of the GP complex (GP-C). Helps to stabilize the spike complex in its native conformation. The SSP is required for efficient glycoprotein expression, post-translational maturation cleavage of G1 and G2, glycoprotein transport to the cell surface plasma membrane, formation of infectious virus particles, and acid pH-dependent glycoprotein-mediated cell fusion. In terms of biological role, forms the virion spikes together with glycoprotein G2. The glycoprotein spike trimers are connected to the underlying matrix. Interacts with the host receptor leading to virus endocytosis. Functionally, forms the virion spikes together with glycoprotein G1. The glycoprotein spike trimers are connected to the underlying matrix. Class I viral fusion protein that directs fusion of viral and host endosomal membranes, leading to delivery of the nucleocapsid into the cytoplasm. Membrane fusion is mediated by irreversible conformational changes induced by acidification. This Cupixi mammarenavirus (isolate Rat/Brasil/BeAn 119303/1970) (CPXV) protein is Pre-glycoprotein polyprotein GP complex.